Here is a 256-residue protein sequence, read N- to C-terminus: Protein Ta0487 (256 aa).

The protein belongs to the CinA family.

The chain is Protein Ta0487 from Thermoplasma acidophilum (strain ATCC 25905 / DSM 1728 / JCM 9062 / NBRC 15155 / AMRC-C165).